Consider the following 166-residue polypeptide: MNFLPKSRKARRRLTILAVAAPVVALAVGLALWGMRDAISLFYTPAQAAAAHVPAGRKVQLGGLVKAGSVVKHPDGLVEFVVADQRSTALVHYKGDLPDLFREGQGIVASGAFDESGTFVANQVLAKHDERYMPREVAKALKEQGEWRGDGQAPSYQGYKPGKPNT.

Residues 1–13 (MNFLPKSRKARRR) are Cytoplasmic-facing. The chain crosses the membrane as a helical; Signal-anchor for type II membrane protein span at residues 14–34 (LTILAVAAPVVALAVGLALWG). Residues 35–166 (MRDAISLFYT…QGYKPGKPNT (132 aa)) lie on the Periplasmic side of the membrane. Residues histidine 128 and tyrosine 132 each contribute to the heme site. The segment at 143–166 (EQGEWRGDGQAPSYQGYKPGKPNT) is disordered.

This sequence belongs to the CcmE/CycJ family.

It is found in the cell inner membrane. In terms of biological role, heme chaperone required for the biogenesis of c-type cytochromes. Transiently binds heme delivered by CcmC and transfers the heme to apo-cytochromes in a process facilitated by CcmF and CcmH. In Caulobacter sp. (strain K31), this protein is Cytochrome c-type biogenesis protein CcmE.